We begin with the raw amino-acid sequence, 477 residues long: MHLLILLPALCVLGAHSAPLSYTYLQHRIQEKPQKDHGRLQFNSLHYPHIKGLLNAHGSWNPPRCGVPDIPAPPDSSSGRNRQKRFVLSGGRWDKTNLTYKIIRFPWQLSKVKVRRTIAEALKVWSEVTPLTFTEVHEGRSDIIIDFTRYWHGDNLPFDGPGGILAHAFFPKTHREGDVHFDYDEAWTIGNNIGTDLLQVAAHEFGHMLGLQHSSISKSLMSPFYTFRYPLSLSADDKHGIQFLYGAPRPPTPSPTPRVEVNQVENESNEIPAAEPDACKTNFDAVSTIRGELFFFKSGYVWRLRGGKLQNGYPALASRHWRGIPDTVDAAFEDSVGNIWFFYGSQFWVFDGKLQASGPFPITDIGISVTQIQAAFVWGTEKNKKTYLFRGGEYWRFNPETRRVESRHSRRIGDWRGVPKGIDAAFQDEQGYAYFVKGRQYWKFDPFKVRVMDGYPHLISQDFFNCQASSTFVNSLR.

An N-terminal signal peptide occupies residues 1–17; that stretch reads MHLLILLPALCVLGAHS. Positions 18–85 are cleaved as a propeptide — activation peptide; the sequence is APLSYTYLQH…SSSGRNRQKR (68 aa). The segment at 64-83 is disordered; it reads RCGVPDIPAPPDSSSGRNRQ. Zn(2+)-binding residues include cysteine 65, histidine 152, and aspartate 154. Residues aspartate 159, glycine 160, glycine 162, and isoleucine 164 each contribute to the Ca(2+) site. Zn(2+)-binding residues include histidine 167, histidine 180, and histidine 203. The active site involves glutamate 204. Zn(2+)-binding residues include histidine 207 and histidine 213. Cysteine 279 and cysteine 466 are joined by a disulfide. 4 Hemopexin repeats span residues 280-324, 325-369, 370-418, and 419-466; these read KTNF…WRGI, PDTV…GISV, TQIQ…WRGV, and PKGI…FFNC.

The protein belongs to the peptidase M10A family. It depends on Ca(2+) as a cofactor. Requires Zn(2+) as cofactor. In terms of tissue distribution, expressed in fibroblast cells that are activated by thyroid hormone. High levels in resorbing tail.

The protein localises to the secreted. It localises to the extracellular space. The protein resides in the extracellular matrix. May be involved in the modification of the extracellular matrix during metamorphic apoptosis. The sequence is that of Stromelysin-3 (mmp11) from Xenopus laevis (African clawed frog).